A 1666-amino-acid polypeptide reads, in one-letter code: Atrochrysone carboxylic acid synthase PKS4 (1666 aa).

The 438-residue stretch at 15-452 (FEPIAIVGIG…GNAGFMVIEE (438 aa)) folds into the Ketosynthase family 3 (KS3) domain. Residues Cys-194, His-332, and His-372 each act as for beta-ketoacyl synthase activity in the active site. The segment at 555-863 (AFCFSGQGGE…WMTALDALMR (309 aa)) is malonyl-CoA:ACP transacylase (MAT) domain. The For acyl/malonyl transferase activity role is filled by Ser-632. The tract at residues 905–1034 (REVKASSTML…EQDLLESLSL (130 aa)) is N-terminal hotdog fold. The PKS/mFAS DH domain occupies 905 to 1206 (REVKASSTML…MAKMKIYVLK (302 aa)). The product template (PT) domain stretch occupies residues 935–1203 (LLNHVMAGYT…DVRMAKMKIY (269 aa)). Residues 1050–1206 (STDVLRKELA…MAKMKIYVLK (157 aa)) form a C-terminal hotdog fold region. An O-(pantetheine 4'-phosphoryl)serine modification is found at Ser-1269. Residues 1331-1395 (ATSPSLPIMP…TSTEPSQTLV (65 aa)) enclose the Carrier domain. The tract at residues 1334-1397 (PSLPIMPNGV…TEPSQTLVAN (64 aa)) is proline-rich linker region. Residues 1444–1529 (TVIGIHCPGL…PPGVVGLTAQ (86 aa)) form an alpha/beta hydrolase superfamily-type thioesterase (TE) domain region.

The catalysed reaction is holo-[ACP] + 8 malonyl-CoA + 8 H(+) = atrochrysone carboxyl-[ACP] + 8 CO2 + 8 CoA + 2 H2O. Its pathway is secondary metabolite biosynthesis. In terms of biological role, non-reducing polyketide synthase that synthesizes the universal anthraquinone precursor atrochrysone carboxylic acid from malonyl-CoA. Produces a mixture of both 3R and 3S enantiomers with an excess of the 3S form. PKS4 catalyzes both hepta- and octaketide synthesis and also yields 6-hydroxymusizin, probably via carboxylating activity inherent to the KS domain. In Calonarius odorifer (Mushroom), this protein is Atrochrysone carboxylic acid synthase PKS4.